The sequence spans 115 residues: MTTSFYFLLMALGLLLYVCQSSFGNQHTRTFDTPKHRCGSEITNSYMDLCYRKRNDAGEKRGRASPLWQRRGFLSKLKARAKRNGAFHLPRDGRGVVEHCCHRPCSNAEFRKYCG.

The N-terminal stretch at 1 to 24 (MTTSFYFLLMALGLLLYVCQSSFG) is a signal peptide. The propeptide occupies 25–29 (NQHTR). The residue at position 34 (proline 34) is a 4-hydroxyproline; partial. 3 cysteine pairs are disulfide-bonded: cysteine 38–cysteine 101, cysteine 50–cysteine 114, and cysteine 100–cysteine 105. Residue glutamate 41 is modified to 4-carboxyglutamate. The propeptide at 52–94 (RKRNDAGEKRGRASPLWQRRGFLSKLKARAKRNGAFHLPRDGR) is c peptide. Glutamate 98 carries the 4-carboxyglutamate modification. Residue proline 104 is modified to 4-hydroxyproline; partial. A 4-carboxyglutamate; partial modification is found at glutamate 109. Cysteine 114 is modified (cysteine amide).

It belongs to the insulin family. As to quaternary structure, heterodimer of A and B chains; disulfide-linked. Expressed by the venom gland.

The protein localises to the secreted. This venom insulin, from a fish-hunting cone snail, facilitates prey capture by rapidly inducing hypoglycemic shock. It is one of the smallest known insulin found in nature and lacks the C-terminal segment of the B chain that, in human insulin, mediates engagement of the insulin receptor (INSR) and assembly of the hormone's hexameric storage form. Despite lacking this segment, it both binds and activates human insulin receptor (long isoform (HIR-B) of INSR) with only a 10-fold lower potency. In vivo, intraperitoneal injection of this peptide into zebrafish lowers blood glucose with the same potency than human insulin. In addition, when applied to water, this peptide reduces overall locomotor activity of zebrafish larvae, observed as a significant decrease in the percentage of time spent swimming and movement frequency. In Conus geographus (Geography cone), this protein is Con-Ins G1b.